The following is a 374-amino-acid chain: Calcium/calmodulin-dependent protein kinase type 1 (374 aa).

Residues 20–276 (YDFRDVLGTG…CEQALQHPWI (257 aa)) enclose the Protein kinase domain. ATP is bound by residues 26–34 (LGTGAFSEV) and lysine 49. Lysine 59 is covalently cross-linked (Glycyl lysine isopeptide (Lys-Gly) (interchain with G-Cter in ubiquitin)). Aspartate 141 serves as the catalytic Proton acceptor. Residue threonine 177 is modified to Phosphothreonine; by CaMKK1 and CaMKK2. The segment at 276–316 (IAGDTALDKNIHQSVSEQIKKNFAKSKWKQAFNATAVVRHM) is autoinhibitory domain. Positions 296-317 (KNFAKSKWKQAFNATAVVRHMR) are calmodulin-binding. Positions 315–321 (HMRKLQL) match the Nuclear export signal motif.

It belongs to the protein kinase superfamily. CAMK Ser/Thr protein kinase family. CaMK subfamily. Monomer. Interacts with XPO1. Post-translationally, phosphorylated by CaMKK1 and CaMKK2 on Thr-177. In terms of processing, polybiquitinated by the E3 ubiquitin-protein ligase complex SCF(FBXL12), leading to proteasomal degradation. As to expression, ubiquitous.

It is found in the cytoplasm. The protein resides in the nucleus. It carries out the reaction L-seryl-[protein] + ATP = O-phospho-L-seryl-[protein] + ADP + H(+). The catalysed reaction is L-threonyl-[protein] + ATP = O-phospho-L-threonyl-[protein] + ADP + H(+). With respect to regulation, activated by Ca(2+)/calmodulin. Binding of calmodulin results in conformational change that relieves intrasteric autoinhibition and allows phosphorylation of Thr-177 within the activation loop by CaMKK1 or CaMKK2. Phosphorylation of Thr-177 results in several fold increase in total activity. Unlike CaMK4, is unable to exhibit autonomous activity after Ca(2+)/calmodulin activation. Calcium/calmodulin-dependent protein kinase that operates in the calcium-triggered CaMKK-CaMK1 signaling cascade and, upon calcium influx, regulates transcription activators activity, cell cycle, hormone production, cell differentiation, actin filament organization and neurite outgrowth. Recognizes the substrate consensus sequence [MVLIF]-x-R-x(2)-[ST]-x(3)-[MVLIF]. Regulates axonal extension and growth cone motility in hippocampal and cerebellar nerve cells. Upon NMDA receptor-mediated Ca(2+) elevation, promotes dendritic growth in hippocampal neurons and is essential in synapses for full long-term potentiation (LTP) and ERK2-dependent translational activation. Downstream of NMDA receptors, promotes the formation of spines and synapses in hippocampal neurons by phosphorylating ARHGEF7/BETAPIX on 'Ser-673', which results in the enhancement of ARHGEF7 activity and activation of RAC1. Promotes neuronal differentiation and neurite outgrowth by activation and phosphorylation of MARK2 on 'Ser-91', 'Ser-92', 'Ser-93' and 'Ser-294'. Promotes nuclear export of HDAC5 and binding to 14-3-3 by phosphorylation of 'Ser-259' and 'Ser-498' in the regulation of muscle cell differentiation. Regulates NUMB-mediated endocytosis by phosphorylation of NUMB on 'Ser-276' and 'Ser-295'. Involved in the regulation of basal and estrogen-stimulated migration of medulloblastoma cells through ARHGEF7/BETAPIX phosphorylation. Is required for proper activation of cyclin-D1/CDK4 complex during G1 progression in diploid fibroblasts. Plays a role in K(+) and ANG2-mediated regulation of the aldosterone synthase (CYP11B2) to produce aldosterone in the adrenal cortex. Phosphorylates EIF4G3/eIF4GII. In vitro phosphorylates CREB1, ATF1, CFTR, MYL9 and SYN1/synapsin I. This chain is Calcium/calmodulin-dependent protein kinase type 1 (Camk1), found in Mus musculus (Mouse).